The chain runs to 560 residues: Glutamate--tRNA ligase, chloroplastic/mitochondrial (560 aa).

47–49 (RFA) contributes to the L-glutamate binding site. The short motif at 50–60 (PSPTGNLHVGG) is the 'HIGH' region element. His-57 contributes to the ATP binding site. Residues Glu-83, 235 to 239 (YNFCV), and Arg-253 each bind L-glutamate. ATP-binding positions include Glu-256 and 291 to 295 (KLSKR). A 'KMSKS' region motif is present at residues 291 to 295 (KLSKR).

It belongs to the class-I aminoacyl-tRNA synthetase family. Glutamate--tRNA ligase type 1 subfamily.

It is found in the plastid. The protein localises to the chloroplast. Its subcellular location is the mitochondrion. The enzyme catalyses tRNA(Glu) + L-glutamate + ATP = L-glutamyl-tRNA(Glu) + AMP + diphosphate. Catalyzes the attachment of glutamate to tRNA(Glu) in a two-step reaction: glutamate is first activated by ATP to form Glu-AMP and then transferred to the acceptor end of tRNA(Glu). The polypeptide is Glutamate--tRNA ligase, chloroplastic/mitochondrial (Hordeum vulgare (Barley)).